We begin with the raw amino-acid sequence, 487 residues long: GPI mannosyltransferase 1 (487 aa).

Helical transmembrane passes span 26 to 46, 87 to 107, and 121 to 141; these read PLPL…YGLW, ILAW…GPWA, and VLFA…LVMG. The segment at 147-175 is disordered; sequence SAAKGKEKDTEKTKEGGKKGPSVTASTGM. The segment covering 150–164 has biased composition (basic and acidic residues); sequence KGKEKDTEKTKEGGK. 7 helical membrane-spanning segments follow: residues 205–225, 227–247, 289–309, 359–379, 393–413, 429–449, and 462–482; these read LLGV…ITLA, LLLG…PAIV, LLLA…MYRL, IESL…PLTL, FAFV…YLVL, MGLV…QQAY, and GLWM…GVIV.

It belongs to the PIGM family.

The protein resides in the endoplasmic reticulum membrane. Its pathway is glycolipid biosynthesis; glycosylphosphatidylinositol-anchor biosynthesis. Its function is as follows. Mannosyltransferase involved in glycosylphosphatidylinositol-anchor biosynthesis. Transfers the first alpha-1,4-mannose to GlcN-acyl-PI during GPI precursor assembly. Required for cell wall integrity. The chain is GPI mannosyltransferase 1 (gim-1) from Neurospora crassa (strain ATCC 24698 / 74-OR23-1A / CBS 708.71 / DSM 1257 / FGSC 987).